A 427-amino-acid chain; its full sequence is Peptidase B (427 aa).

Residues lysine 195 and aspartate 200 each contribute to the Mn(2+) site. Lysine 207 is an active-site residue. The Mn(2+) site is built by aspartate 218, aspartate 277, and glutamate 279. Arginine 281 is a catalytic residue.

It belongs to the peptidase M17 family. As to quaternary structure, homohexamer. Mn(2+) serves as cofactor.

It is found in the cytoplasm. It catalyses the reaction Release of an N-terminal amino acid, Xaa, from a peptide or arylamide. Xaa is preferably Glu or Asp but may be other amino acids, including Leu, Met, His, Cys and Gln.. Probably plays an important role in intracellular peptide degradation. The protein is Peptidase B of Shigella boydii serotype 18 (strain CDC 3083-94 / BS512).